Reading from the N-terminus, the 125-residue chain is Small ribosomal subunit protein uS13 (125 aa).

The tract at residues 93-125 (RKGLPVRGQRTKTNARTRKGPKRTVAGKKKAGR) is disordered.

The protein belongs to the universal ribosomal protein uS13 family. Part of the 30S ribosomal subunit. Forms a loose heterodimer with protein S19. Forms two bridges to the 50S subunit in the 70S ribosome.

Its function is as follows. Located at the top of the head of the 30S subunit, it contacts several helices of the 16S rRNA. In the 70S ribosome it contacts the 23S rRNA (bridge B1a) and protein L5 of the 50S subunit (bridge B1b), connecting the 2 subunits; these bridges are implicated in subunit movement. Contacts the tRNAs in the A and P-sites. The protein is Small ribosomal subunit protein uS13 of Paenarthrobacter aurescens (strain TC1).